The primary structure comprises 125 residues: Large ribosomal subunit protein bL12 (125 aa).

Belongs to the bacterial ribosomal protein bL12 family. Homodimer. Part of the ribosomal stalk of the 50S ribosomal subunit. Forms a multimeric L10(L12)X complex, where L10 forms an elongated spine to which 2 to 4 L12 dimers bind in a sequential fashion. Binds GTP-bound translation factors.

Functionally, forms part of the ribosomal stalk which helps the ribosome interact with GTP-bound translation factors. Is thus essential for accurate translation. The polypeptide is Large ribosomal subunit protein bL12 (Delftia acidovorans (strain DSM 14801 / SPH-1)).